Here is a 483-residue protein sequence, read N- to C-terminus: Protein hedgehog (483 aa).

An N-terminal signal peptide occupies residues 1 to 19 (MDNQTVAAIWSCASATCLS). Positions 20–92 (LDAKRHSVET…LALNFRHAHS (73 aa)) are excised as a propeptide. The segment at 28–57 (ETNTNDRQAPPGLSNSNNNNNNNKSTAVDA) is disordered. Residues 41 to 50 (SNSNNNNNNN) show a composition bias toward low complexity. Cysteine 93 carries the N-palmitoyl cysteine lipid modification. Ca(2+) contacts are provided by glutamate 157, glutamate 158, aspartate 163, threonine 193, glutamate 194, aspartate 197, and aspartate 199. Residue glycine 266 is the site of Cholesterol glycine ester attachment.

Belongs to the hedgehog family. Interacts with shf. In terms of processing, the C-terminal part of the hedgehog protein precursor displays an autoproteolysis activity that results in the cleavage of the full-length protein into two parts (N-product and C-product). In addition, the C-terminal part displays a cholesterol transferase activity that results by the covalent attachment of a cholesterol moiety to the C-terminal of the newly generated N-product. The N-product is the active species in both local and long-range signaling, whereas the C-product has no signaling activity. Post-translationally, cholesterylation is required for N-product targeting to lipid rafts and multimerization. N-palmitoylation by Rasp of the hedgehog N-product, within the secretory pathway, is required for the embryonic and larval patterning activities of the hedgehog signal.

Its subcellular location is the nucleus. The protein localises to the cytoplasm. It localises to the cell membrane. It carries out the reaction glycyl-L-cysteinyl-[protein] + cholesterol + H(+) = [protein]-C-terminal glycyl cholesterol ester + N-terminal L-cysteinyl-[protein]. Its function is as follows. The C-terminal part of the hedgehog protein precursor displays an autoproteolysis activity that results in the cleavage of the full-length protein into two parts (N-product and C-product). In addition, the C-terminal part displays a cholesterol transferase activity that results by the covalent attachment of a cholesterol moiety to the C-terminal of the newly generated N-product. Once cleaved, the C-product has no signaling activity and diffuses from the cell. In terms of biological role, the dually lipidated hedgehog protein N-product is a morphogen which is essential for a variety of patterning events during development. Establishes the anterior-posterior axis of the embryonic segments and patterns the larval imaginal disks. Binds to the patched (ptc) receptor, which functions in association with smoothened (smo), to activate the transcription of target genes wingless (wg), decapentaplegic (dpp) and ptc. In the absence of hh, ptc represses the constitutive signaling activity of smo through fused (fu). Essential component of a signaling pathway which regulates the Duox-dependent gut immune response to bacterial uracil; required to activate Cad99C-dependent endosome formation, norpA-dependent Ca2+ mobilization and p38 MAPK, which are essential steps in the Duox-dependent production of reactive oxygen species (ROS) in response to intestinal bacterial infection. During photoreceptor differentiation, it up-regulates transcription of Ubr3, which in turn promotes the hh-signaling pathway by mediating the ubiquitination and degradation of cos. The protein is Protein hedgehog of Drosophila virilis (Fruit fly).